The following is a 101-amino-acid chain: Urease subunit beta (101 aa).

Belongs to the urease beta subunit family. As to quaternary structure, heterotrimer of UreA (gamma), UreB (beta) and UreC (alpha) subunits. Three heterotrimers associate to form the active enzyme.

The protein resides in the cytoplasm. It carries out the reaction urea + 2 H2O + H(+) = hydrogencarbonate + 2 NH4(+). The protein operates within nitrogen metabolism; urea degradation; CO(2) and NH(3) from urea (urease route): step 1/1. This chain is Urease subunit beta, found in Bradyrhizobium diazoefficiens (strain JCM 10833 / BCRC 13528 / IAM 13628 / NBRC 14792 / USDA 110).